Here is a 101-residue protein sequence, read N- to C-terminus: Small ribosomal subunit protein uS14 (101 aa).

It belongs to the universal ribosomal protein uS14 family. As to quaternary structure, part of the 30S ribosomal subunit. Contacts proteins S3 and S10.

Its function is as follows. Binds 16S rRNA, required for the assembly of 30S particles and may also be responsible for determining the conformation of the 16S rRNA at the A site. The chain is Small ribosomal subunit protein uS14 from Acinetobacter baylyi (strain ATCC 33305 / BD413 / ADP1).